Consider the following 1953-residue polypeptide: Protein BNI1 (1953 aa).

Disordered regions lie at residues 1-152 (MLKN…ASSL), 230-258 (MRAN…ANSS), 263-282 (KSVL…SNSL), and 287-306 (TLSS…SGSL). The span at 31–40 (ANSNATNSNT) shows a compositional bias: low complexity. Composition is skewed to polar residues over residues 41–100 (GSPT…SQYM) and 110–143 (VSSQ…RQHT). The GBD/FH3 domain maps to 174–696 (EMPSDPYEVE…NVSVASTSDE (523 aa)). The span at 232-246 (ANTTSSSTASRTSMA) shows a compositional bias: low complexity. Positions 263–278 (KSVLMTSASSPTSTVY) are enriched in polar residues. 2 positions are modified to phosphoserine: S311 and S325. A disordered region spans residues 312 to 337 (LNNIYRGGAENNTSASTLPGDRTNRP). Coiled-coil stretches lie at residues 712-807 (QTDE…TILN), 864-894 (NKRL…EFEK), and 928-981 (NKLN…YKGF). 3 disordered regions span residues 990 to 1014 (IMDS…SLDP), 1040 to 1094 (HEIQ…LDAL), and 1149 to 1330 (TQKV…MPAS). In terms of domain architecture, FH1 spans 1053–1337 (SSSSSDDESE…PASQIKSAVT (285 aa)). S1085 and S1170 each carry phosphoserine. Residues 1184-1211 (DKAEKDMRQHVENGKQGRVVNHEEDKTA) show a composition bias toward basic and acidic residues. Over residues 1217-1237 (SKLNNTDGAEDLSTQSSVLSS) the composition is skewed to polar residues. A compositionally biased stretch (pro residues) spans 1238–1250 (QPPPPPPPPPPVP). Basic and acidic residues predominate over residues 1257–1270 (SLEKEKKSEDDTVK). A compositionally biased stretch (pro residues) spans 1278–1292 (PAPPPPPPPPPPPPM). 2 positions are modified to phosphoserine: S1338 and S1344. One can recognise an FH2 domain in the interval 1348–1766 (FEKYPRPHKK…YIKHKKIVEE (419 aa)). The stretch at 1732–1811 (KFADFINEYK…DKLLEQLKNA (80 aa)) forms a coiled coil. The span at 1768–1779 (QKRAQEKEKQKE) shows a compositional bias: basic and acidic residues. 3 disordered regions span residues 1768 to 1797 (QKRA…AEDR), 1809 to 1844 (KNAG…LLND), and 1872 to 1899 (PTPL…LEDQ). Residues 1792-1826 (DEAEDRRAVMDKLLEQLKNAGPAKSDPSSARKRAL) form the DAD domain. Residues 1821–1830 (ARKRALVRKK) are compositionally biased toward basic residues. The segment covering 1880–1896 (VMNTSEDLPSPSKTSAL) has biased composition (polar residues). T1918 bears the Phosphothreonine mark.

The protein belongs to the formin homology family. BNI1 subfamily. As to quaternary structure, homodimer, and possibly also homotetramer. Interacts with PFY1 via the FH1 domain and with actin via the FH2 domain.

It localises to the cell membrane. The protein localises to the cell projection. It is found in the ruffle membrane. The protein resides in the cytoplasm. Its subcellular location is the cytoskeleton. In terms of biological role, required for the assembly of F-actin structures, such as actin cables and stress fibers. Nucleates actin filaments. Binds to the barbed end of the actin filament and acts as a leaky capper, slowing both polymerization and depolymerization. Protects the growing actin fiber from tight capping proteins and so increases the time of elongation and the total amount of F-actin. May organize microtubules by mediating spindle positioning and movement in the budding process. Potential target of the RHO family members. This Saccharomyces cerevisiae (strain ATCC 204508 / S288c) (Baker's yeast) protein is Protein BNI1 (BNI1).